The primary structure comprises 336 residues: MKNNYTSLKSPIDEEDELKTGHEIDLEKGLLPEYDSEEEGALPPYSDHARVSNPPNTHRENHSSGTTDDSSPFLIKLLISFTPIVLLNALAVWYLKYKDAFFKNYGAAEWTLFGFWCLVCTLVLIILTYFYETWTKAVKVTVIFLAQCIKVTAVFLAQCVKGLFNIRREMMIIIWILWLIICCILFGCVKDGRLNFNKALICSTCTISAVLFLIVSSVCIPIWTLWRALSGMLQVLGIHGIIAVLVNGSMSLFGKHFGWRGYEIEGFVLFFTSNALFLYEMERPGVLKRMRNTTGNVIGYICGGIEDAFRRIKNAFRGANDNNNIPLGEMDVEGEV.

2 disordered regions span residues 1–21 (MKNNYTSLKSPIDEEDELKTG) and 35–68 (DSEEEGALPPYSDHARVSNPPNTHRENHSSGTTD). Transmembrane regions (helical) follow at residues 73–93 (FLIKLLISFTPIVLLNALAVW), 110–130 (WTLFGFWCLVCTLVLIILTYF), 140–160 (VTVIFLAQCIKVTAVFLAQCV), 169–189 (EMMIIIWILWLIICCILFGCV), 206–226 (TISAVLFLIVSSVCIPIWTLW), 228–248 (ALSGMLQVLGIHGIIAVLVNG), and 261–281 (GYEIEGFVLFFTSNALFLYEM).

Belongs to the WTF family. Homomer. Interacts with other proteins that exhibit high sequence similarity.

The protein localises to the spore membrane. Its subcellular location is the vacuole membrane. Acts as a suppressor component of the dual wtf meiotic drive system, and can suppress but not confer meiotic drive by compatible poisons. Wtf meiotic drive systems promote unequal transmission of alleles from the parental zygote to progeny spores by encoding a poison and an antidote from the same locus; the poison is trans-acting and forms toxic aggregates in all spores within an ascus, wherease the antidote is spore-specific and targets aggregates for degradation by the vacuole. Meiotic drive by wtf systems therefore lead to poisoning of all progeny that do not inherit the dual poison/antidote allele, or express a compatible antidote. This Schizosaccharomyces kambucha (Fission yeast) protein is Meiotic drive suppressor wtf23.